We begin with the raw amino-acid sequence, 201 residues long: Small ribosomal subunit protein uS4c (201 aa).

A disordered region spans residues 20-44 (GLTSKRPRAGSDLRNQSRSGKKSQY). Positions 89–152 (MRLDNILFRL…NSRTLVQNLL (64 aa)) constitute an S4 RNA-binding domain.

Belongs to the universal ribosomal protein uS4 family. In terms of assembly, part of the 30S ribosomal subunit. Contacts protein S5. The interaction surface between S4 and S5 is involved in control of translational fidelity.

The protein resides in the plastid. Its subcellular location is the chloroplast. Functionally, one of the primary rRNA binding proteins, it binds directly to 16S rRNA where it nucleates assembly of the body of the 30S subunit. Its function is as follows. With S5 and S12 plays an important role in translational accuracy. The protein is Small ribosomal subunit protein uS4c (rps4) of Arabis hirsuta (Hairy rock-cress).